A 118-amino-acid chain; its full sequence is uncharacterized protein (118 aa).

This is an uncharacterized protein from Kitasatospora aureofaciens (Streptomyces aureofaciens).